A 66-amino-acid chain; its full sequence is Large ribosomal subunit protein bL35 (66 aa).

Residues 1-46 are compositionally biased toward basic residues; it reads MPKMKTHRASAKRFKRTANGGLKRHHAFTGHRFHGKTKKQRRHLRK. Residues 1–52 are disordered; sequence MPKMKTHRASAKRFKRTANGGLKRHHAFTGHRFHGKTKKQRRHLRKPAMVSR.

It belongs to the bacterial ribosomal protein bL35 family.

In Lactobacillus acidophilus (strain ATCC 700396 / NCK56 / N2 / NCFM), this protein is Large ribosomal subunit protein bL35.